Here is a 544-residue protein sequence, read N- to C-terminus: Chaperonin GroEL (544 aa).

ATP contacts are provided by residues 30-33, K51, 87-91, G415, 481-483, and D497; these read TLGP, DGTTT, and DAL.

The protein belongs to the chaperonin (HSP60) family. Forms a cylinder of 14 subunits composed of two heptameric rings stacked back-to-back. Interacts with the co-chaperonin GroES.

Its subcellular location is the cytoplasm. The enzyme catalyses ATP + H2O + a folded polypeptide = ADP + phosphate + an unfolded polypeptide.. In terms of biological role, together with its co-chaperonin GroES, plays an essential role in assisting protein folding. The GroEL-GroES system forms a nano-cage that allows encapsulation of the non-native substrate proteins and provides a physical environment optimized to promote and accelerate protein folding. This is Chaperonin GroEL from Chlamydia trachomatis serovar A (strain ATCC VR-571B / DSM 19440 / HAR-13).